Here is a 165-residue protein sequence, read N- to C-terminus: UPF0178 protein Bphyt_5655 (165 aa).

Disordered regions lie at residues 115–134 (LRGSGVDTGGPSAFSQRDSK) and 139–165 (ELDRWLSRQRPQPDASAPQSADEPPTE).

The protein belongs to the UPF0178 family.

This Paraburkholderia phytofirmans (strain DSM 17436 / LMG 22146 / PsJN) (Burkholderia phytofirmans) protein is UPF0178 protein Bphyt_5655.